Consider the following 162-residue polypeptide: Phosphopantetheine adenylyltransferase (162 aa).

A substrate-binding site is contributed by Thr-9. ATP-binding positions include 9–10 (TF) and His-17. Positions 41, 73, and 87 each coordinate substrate. ATP is bound by residues 88 to 90 (GLR), Glu-98, and 123 to 129 (FAFLSST).

This sequence belongs to the bacterial CoaD family. Homohexamer. Mg(2+) is required as a cofactor.

It is found in the cytoplasm. The enzyme catalyses (R)-4'-phosphopantetheine + ATP + H(+) = 3'-dephospho-CoA + diphosphate. The protein operates within cofactor biosynthesis; coenzyme A biosynthesis; CoA from (R)-pantothenate: step 4/5. Functionally, reversibly transfers an adenylyl group from ATP to 4'-phosphopantetheine, yielding dephospho-CoA (dPCoA) and pyrophosphate. The polypeptide is Phosphopantetheine adenylyltransferase (Vibrio atlanticus (strain LGP32) (Vibrio splendidus (strain Mel32))).